The chain runs to 201 residues: MMIGLTGGIASGKSSVAKMMEELGLPIVDADQVARDVVEPGMPAYEAIVAHFGTGVVNDDGTLNRKALGSIVFQQEEERRVLNEIVHPAVRRQMQQQKEQLIRSGEKTIVFDIPLLYESNLFYLVEKVLLVYVDEHTQLQRLMNRDQAGKDDAIHRIRSQRPLESKRDRADAIIDNSGTLDATKRQLIDILKRWKVIPEDQ.

One can recognise a DPCK domain in the interval 2-201; that stretch reads MIGLTGGIAS…KRWKVIPEDQ (200 aa). 10-15 is an ATP binding site; that stretch reads ASGKSS.

This sequence belongs to the CoaE family.

Its subcellular location is the cytoplasm. It catalyses the reaction 3'-dephospho-CoA + ATP = ADP + CoA + H(+). It functions in the pathway cofactor biosynthesis; coenzyme A biosynthesis; CoA from (R)-pantothenate: step 5/5. In terms of biological role, catalyzes the phosphorylation of the 3'-hydroxyl group of dephosphocoenzyme A to form coenzyme A. The chain is Dephospho-CoA kinase from Halalkalibacterium halodurans (strain ATCC BAA-125 / DSM 18197 / FERM 7344 / JCM 9153 / C-125) (Bacillus halodurans).